The sequence spans 367 residues: 2'-5'-oligoadenylate synthase 1A (367 aa).

Positions 14–61 are interaction with dsRNA; it reads DKFIEDYLLPDTTFGADVKSAVNVVCDFLKERCFQGAAHPVRVSKVVK. Ser-64 is an ATP binding site. The Mg(2+) site is built by Asp-76, Asp-78, and Asp-149. Residues 201–211 are interaction with dsRNA; that stretch reads QRPTKLKSLIR. The ATP site is built by Arg-211, Lys-214, and Gln-231. Cys-364 carries the S-geranylgeranyl cysteine lipid modification.

Belongs to the 2-5A synthase family. As to quaternary structure, monomer. Homotetramer. Interacts with OAS1D; the interaction inhibits OAS1A catalytic activity. Requires Mg(2+) as cofactor. C-terminal prenylated. As to expression, expressed in oocytes and granulosa cells of ovary, in intestine, stomach, spleen and uterus (at protein level). Expressed at high levels in the digestive tract and lymphoid organs. Expressed in ovary and spleen.

The protein resides in the cytoplasm. Its subcellular location is the mitochondrion. It is found in the nucleus. It localises to the microsome. The protein localises to the endoplasmic reticulum. The enzyme catalyses 3 ATP = 5'-triphosphoadenylyl-(2'-&gt;5')-adenylyl-(2'-&gt;5')-adenosine + 2 diphosphate. With respect to regulation, produced as a latent enzyme which is activated by dsRNA generated during the course of viral infection. The dsRNA activator must be at least 15 nucleotides long, and no modification of the 2'-hydroxyl group is tolerated. ssRNA or dsDNA do not act as activators. In terms of biological role, interferon-induced, dsRNA-activated antiviral enzyme which plays a critical role in cellular innate antiviral response. In addition, it may also play a role in other cellular processes such as apoptosis, cell growth, differentiation and gene regulation. Synthesizes higher oligomers of 2'-5'-oligoadenylates (2-5A) from ATP which then bind to the inactive monomeric form of ribonuclease L (RNase L) leading to its dimerization and subsequent activation. Activation of RNase L leads to degradation of cellular as well as viral RNA, resulting in the inhibition of protein synthesis, thus terminating viral replication. Can mediate the antiviral effect via the classical RNase L-dependent pathway or an alternative antiviral pathway independent of RNase L. This chain is 2'-5'-oligoadenylate synthase 1A (Oas1a), found in Mus musculus (Mouse).